Here is a 426-residue protein sequence, read N- to C-terminus: Serine--tRNA ligase (426 aa).

233–235 (TAE) provides a ligand contact to L-serine. ATP is bound at residue 264–266 (RSE). An L-serine-binding site is contributed by E287. 351 to 354 (EISS) lines the ATP pocket. Residue S387 coordinates L-serine.

Belongs to the class-II aminoacyl-tRNA synthetase family. Type-1 seryl-tRNA synthetase subfamily. As to quaternary structure, homodimer. The tRNA molecule binds across the dimer.

The protein resides in the cytoplasm. The enzyme catalyses tRNA(Ser) + L-serine + ATP = L-seryl-tRNA(Ser) + AMP + diphosphate + H(+). It carries out the reaction tRNA(Sec) + L-serine + ATP = L-seryl-tRNA(Sec) + AMP + diphosphate + H(+). The protein operates within aminoacyl-tRNA biosynthesis; selenocysteinyl-tRNA(Sec) biosynthesis; L-seryl-tRNA(Sec) from L-serine and tRNA(Sec): step 1/1. In terms of biological role, catalyzes the attachment of serine to tRNA(Ser). Is also able to aminoacylate tRNA(Sec) with serine, to form the misacylated tRNA L-seryl-tRNA(Sec), which will be further converted into selenocysteinyl-tRNA(Sec). The chain is Serine--tRNA ligase from Pseudomonas syringae pv. syringae (strain B728a).